Consider the following 437-residue polypeptide: UDP-N-acetylmuramoylalanine--D-glutamate ligase (437 aa).

ATP is bound at residue 112 to 118; sequence GSNGKST.

It belongs to the MurCDEF family.

It is found in the cytoplasm. The enzyme catalyses UDP-N-acetyl-alpha-D-muramoyl-L-alanine + D-glutamate + ATP = UDP-N-acetyl-alpha-D-muramoyl-L-alanyl-D-glutamate + ADP + phosphate + H(+). Its pathway is cell wall biogenesis; peptidoglycan biosynthesis. Cell wall formation. Catalyzes the addition of glutamate to the nucleotide precursor UDP-N-acetylmuramoyl-L-alanine (UMA). This is UDP-N-acetylmuramoylalanine--D-glutamate ligase from Haemophilus influenzae (strain 86-028NP).